Reading from the N-terminus, the 325-residue chain is Forkhead box protein B1 (325 aa).

Residues 12-103 constitute a DNA-binding region (fork-head); the sequence is QKPPYSYISL…GDMFENGSFL (92 aa). Low complexity predominate over residues 284 to 309; the sequence is LSNSPPSLSPTSSQTATSQSSPATPS. The interval 284–325 is disordered; that stretch reads LSNSPPSLSPTSSQTATSQSSPATPSETLTSPASALHSVAVH.

It is found in the nucleus. Functionally, transcription factor expressed by neural progenitor cells in specific regions of the embryonic neuroepithelium. Essential for the mammillary nuclei maintenance. Negatively regulates the proliferation of oligodendrocyte progenitors and promotes oligodendrocyte maturation. Also expressed in mammary glands, plays a role in lactation, controls development of mammary glands and the inferior colliculi of the midbrain in the central nervous system that regulates the milk-ejection reflex. This Homo sapiens (Human) protein is Forkhead box protein B1 (FOXB1).